The primary structure comprises 360 residues: Flavin-dependent trigonelline monooxygenase, oxygenase component (360 aa).

It belongs to the bacterial luciferase oxidoreductase family. Homodimer. The trigonelline monooxygenase is composed of a reductase component TgnA and an oxygenase component TgnB.

The catalysed reaction is N-methylnicotinate + FMNH2 + O2 = (Z)-2-((N-methylformamido)methylene)-5-hydroxybutanolactone + FMN + H(+). It carries out the reaction N-methylnicotinate + FADH2 + O2 = (Z)-2-((N-methylformamido)methylene)-5-hydroxybutanolactone + FAD + H(+). Functionally, involved in the degradation of the pyridine ring of trigonelline (TG; N-methylnicotinate) into succinate and methylamine as carbon and nitrogen sources, respectively. Catalyzes the insertion of two oxygens, followed by a ring cleavage of trigonelline to yield (Z)-2-((N-methylformamido)methylene)-5-hydroxybutyrolactone (MFMB). It is able to use reduced FMN or FAD. The polypeptide is Flavin-dependent trigonelline monooxygenase, oxygenase component (Acinetobacter baylyi (strain ATCC 33305 / BD413 / ADP1)).